Consider the following 236-residue polypeptide: 5'-methylthioadenosine/S-adenosylhomocysteine nucleosidase (236 aa).

The Proton acceptor role is filled by Glu-12. Residues Gly-78, Ile-153, and 174–175 (ME) each bind substrate. The Proton donor role is filled by Asp-198.

It belongs to the PNP/UDP phosphorylase family. MtnN subfamily.

It carries out the reaction S-adenosyl-L-homocysteine + H2O = S-(5-deoxy-D-ribos-5-yl)-L-homocysteine + adenine. The catalysed reaction is S-methyl-5'-thioadenosine + H2O = 5-(methylsulfanyl)-D-ribose + adenine. It catalyses the reaction 5'-deoxyadenosine + H2O = 5-deoxy-D-ribose + adenine. It participates in amino-acid biosynthesis; L-methionine biosynthesis via salvage pathway; S-methyl-5-thio-alpha-D-ribose 1-phosphate from S-methyl-5'-thioadenosine (hydrolase route): step 1/2. Catalyzes the irreversible cleavage of the glycosidic bond in both 5'-methylthioadenosine (MTA) and S-adenosylhomocysteine (SAH/AdoHcy) to adenine and the corresponding thioribose, 5'-methylthioribose and S-ribosylhomocysteine, respectively. Also cleaves 5'-deoxyadenosine, a toxic by-product of radical S-adenosylmethionine (SAM) enzymes, into 5-deoxyribose and adenine. The chain is 5'-methylthioadenosine/S-adenosylhomocysteine nucleosidase from Shewanella oneidensis (strain ATCC 700550 / JCM 31522 / CIP 106686 / LMG 19005 / NCIMB 14063 / MR-1).